We begin with the raw amino-acid sequence, 358 residues long: MSKIFDFVKPGVIFGDDVQKVFQVAKENKFALPAVNCVGTDSINAVMEAAAKVRAPIIVQFSNGGAAFIAGKGLKLEGQQGAILGAIAGAHHVHQMAEYYGVPVILHTDHCAKKLLPWLDGLLDAGEKHFAATGKPLFSSHMIDLSEESLEENIEICSQYLARMSKIGMTLELELGCTGGEEDGVDNSHLDNSALYTQPEDVDYAFTKLSAISPRFTIAASFGNVHGVYKPGNVQLTPVILKNSQEYVSKKHNLPHNSLNFVFHGGSGSTAAEIKEAVSYGVVKMNIDTDTQWATWEGVLKYYKKNEGYLQGQLGNPEGDDKPNKKYYDPRVWLRAAQTGMIERLEQAFKELNCIDVL.

Residue S62 coordinates D-glyceraldehyde 3-phosphate. D109 functions as the Proton donor in the catalytic mechanism. Residues H110, D144, E174, and H226 each contribute to the Zn(2+) site. Residue G227 coordinates dihydroxyacetone phosphate. A Zn(2+)-binding site is contributed by H264. Dihydroxyacetone phosphate contacts are provided by residues 265-267 (GGS) and 286-289 (NIDT).

The protein belongs to the class II fructose-bisphosphate aldolase family. Zn(2+) serves as cofactor.

The enzyme catalyses beta-D-fructose 1,6-bisphosphate = D-glyceraldehyde 3-phosphate + dihydroxyacetone phosphate. It functions in the pathway carbohydrate degradation; glycolysis; D-glyceraldehyde 3-phosphate and glycerone phosphate from D-glucose: step 4/4. In terms of biological role, catalyzes the aldol condensation of dihydroxyacetone phosphate (DHAP or glycerone-phosphate) with glyceraldehyde 3-phosphate (G3P) to form fructose 1,6-bisphosphate (FBP) in gluconeogenesis and the reverse reaction in glycolysis. The protein is Fructose-bisphosphate aldolase (fba) of Edwardsiella ictaluri (strain 93-146).